Here is a 276-residue protein sequence, read N- to C-terminus: MRNIAFLIGLFFIGYSSCVLHATPTRASLVEKSDAESTHVEQWDSNGKRTLQADDRERILAEERGMEQTLLPAAEAIGKTKVSEKAVSRASLGSKLNPMTWPKRILYKIKLWYARFRQNLLKRATMDEESIDRSMMSGLTPFALKKIKNDIFHYSSSVPRDAIKIEKDYNSYVDQFFGQFNGLFKDPPVFEMAKWKKLEADMTSTEQIVERTALNKVSQYIDKGFSNEKLISLDVSPFVYMRLLEKRGVFKDVENNIDKIEHLKVYVKAYEEHLMV.

The N-terminal stretch at 1–18 (MRNIAFLIGLFFIGYSSC) is a signal peptide. A RxLR-dEER motif is present at residues 49-64 (RTLQADDRERILAEER).

This sequence belongs to the RxLR effector family.

Its subcellular location is the secreted. It is found in the host nucleus. It localises to the host cytoplasm. In terms of biological role, secreted effector that partially suppresses the host cell death induced by cell death-inducing proteins. The polypeptide is Secreted RxLR effector protein 150 (Plasmopara viticola (Downy mildew of grapevine)).